The following is a 745-amino-acid chain: Phosphoribosylformylglycinamidine synthase subunit PurL (745 aa).

Residue H54 is part of the active site. 2 residues coordinate ATP: Y57 and K96. E98 provides a ligand contact to Mg(2+). Substrate is bound by residues 99 to 102 (SHNH) and R121. H100 acts as the Proton acceptor in catalysis. Residue D122 coordinates Mg(2+). A substrate-binding site is contributed by Q250. Position 278 (D278) interacts with Mg(2+). 322-324 (ESQ) lines the substrate pocket. ATP is bound by residues D503 and G540. N541 serves as a coordination point for Mg(2+). Position 543 (S543) interacts with substrate.

Belongs to the FGAMS family. As to quaternary structure, monomer. Part of the FGAM synthase complex composed of 1 PurL, 1 PurQ and 2 PurS subunits.

The protein localises to the cytoplasm. It carries out the reaction N(2)-formyl-N(1)-(5-phospho-beta-D-ribosyl)glycinamide + L-glutamine + ATP + H2O = 2-formamido-N(1)-(5-O-phospho-beta-D-ribosyl)acetamidine + L-glutamate + ADP + phosphate + H(+). It functions in the pathway purine metabolism; IMP biosynthesis via de novo pathway; 5-amino-1-(5-phospho-D-ribosyl)imidazole from N(2)-formyl-N(1)-(5-phospho-D-ribosyl)glycinamide: step 1/2. Its function is as follows. Part of the phosphoribosylformylglycinamidine synthase complex involved in the purines biosynthetic pathway. Catalyzes the ATP-dependent conversion of formylglycinamide ribonucleotide (FGAR) and glutamine to yield formylglycinamidine ribonucleotide (FGAM) and glutamate. The FGAM synthase complex is composed of three subunits. PurQ produces an ammonia molecule by converting glutamine to glutamate. PurL transfers the ammonia molecule to FGAR to form FGAM in an ATP-dependent manner. PurS interacts with PurQ and PurL and is thought to assist in the transfer of the ammonia molecule from PurQ to PurL. The sequence is that of Phosphoribosylformylglycinamidine synthase subunit PurL from Helicobacter hepaticus (strain ATCC 51449 / 3B1).